We begin with the raw amino-acid sequence, 71 residues long: Disintegrin simusmin (71 aa).

The Disintegrin domain occupies 1–71 (AGEECDCGSP…SADCPRNPFH (71 aa)). 6 disulfide bridges follow: cysteine 5–cysteine 20, cysteine 7–cysteine 15, cysteine 14–cysteine 37, cysteine 28–cysteine 34, cysteine 33–cysteine 58, and cysteine 46–cysteine 65. The short motif at 50 to 52 (RGD) is the Cell attachment site element.

Belongs to the venom metalloproteinase (M12B) family. P-II subfamily. P-IIa sub-subfamily. In terms of assembly, monomer. In terms of tissue distribution, expressed by the venom gland.

Its subcellular location is the secreted. In terms of biological role, inhibits ADP- (IC(50)=56 nM) and collagen-induced (IC(50)=49 nM) aggregation of human platelets. In vitro, inhibits adhesion of endothelial cells to vitronectin, type-I collagen and, to a lower degree, fibronectin and laminin. In Crotalus simus (Central American rattlesnake), this protein is Disintegrin simusmin.